Here is a 340-residue protein sequence, read N- to C-terminus: Phosphate acyltransferase (340 aa).

It belongs to the PlsX family. As to quaternary structure, homodimer. Probably interacts with PlsY.

It localises to the cytoplasm. It carries out the reaction a fatty acyl-[ACP] + phosphate = an acyl phosphate + holo-[ACP]. It functions in the pathway lipid metabolism; phospholipid metabolism. Functionally, catalyzes the reversible formation of acyl-phosphate (acyl-PO(4)) from acyl-[acyl-carrier-protein] (acyl-ACP). This enzyme utilizes acyl-ACP as fatty acyl donor, but not acyl-CoA. The chain is Phosphate acyltransferase from Pseudomonas syringae pv. tomato (strain ATCC BAA-871 / DC3000).